The chain runs to 222 residues: Cytidylate kinase (222 aa).

9-17 is an ATP binding site; the sequence is GPAGSGKTT.

The protein belongs to the cytidylate kinase family. Type 1 subfamily.

Its subcellular location is the cytoplasm. The catalysed reaction is CMP + ATP = CDP + ADP. It carries out the reaction dCMP + ATP = dCDP + ADP. This chain is Cytidylate kinase, found in Thermosipho africanus (strain TCF52B).